The primary structure comprises 297 residues: CASP-like protein 4A2 (297 aa).

The segment at 1-136 (MKMKRTVSSN…MNGEESATTA (136 aa)) is disordered. The Cytoplasmic portion of the chain corresponds to 1–149 (MKMKRTVSSN…ARRDDLVSVT (149 aa)). Over residues 8–19 (SSNSEAYSYNES) the composition is skewed to low complexity. Residues 69–83 (LPSPIPPPPPQIPPP) are compositionally biased toward pro residues. A compositionally biased stretch (polar residues) spans 93–121 (MNSSLDKSPSSMVVQNSWVREDGQQNTTR). Residues 150 to 170 (ALGFRITEVILCVISFSIMAA) form a helical membrane-spanning segment. Residues 171–189 (DKTQGWSGDSYDRYKEYRY) lie on the Extracellular side of the membrane. Residues 190-210 (CLAVNVIAFVYSAFEACDAAC) traverse the membrane as a helical segment. Residues 211-225 (YMAKESYMMNCGFHD) lie on the Cytoplasmic side of the membrane. A helical membrane pass occupies residues 226 to 246 (LFVFSMDQLLAYLLMSASSCA). Topologically, residues 247 to 265 (ATRVDDWVSNWGKDEFTQM) are extracellular. The helical transmembrane segment at 266 to 286 (ATASIAVSFLAFGAFAVSALI) threads the bilayer. At 287–297 (SSYRLFTHASS) the chain is on the cytoplasmic side.

This sequence belongs to the Casparian strip membrane proteins (CASP) family. In terms of assembly, homodimer and heterodimers.

Its subcellular location is the cell membrane. The chain is CASP-like protein 4A2 from Arabidopsis lyrata subsp. lyrata (Lyre-leaved rock-cress).